The primary structure comprises 205 residues: tRNA (guanine-N(7)-)-methyltransferase (205 aa).

Residues E34, E59, D86, and D107 each contribute to the S-adenosyl-L-methionine site. Residue D107 is part of the active site. K111 lines the substrate pocket. The interval R113–R118 is interaction with RNA. Substrate is bound by residues D144 and T182–E185.

Belongs to the class I-like SAM-binding methyltransferase superfamily. TrmB family.

The catalysed reaction is guanosine(46) in tRNA + S-adenosyl-L-methionine = N(7)-methylguanosine(46) in tRNA + S-adenosyl-L-homocysteine. It functions in the pathway tRNA modification; N(7)-methylguanine-tRNA biosynthesis. In terms of biological role, catalyzes the formation of N(7)-methylguanine at position 46 (m7G46) in tRNA. The sequence is that of tRNA (guanine-N(7)-)-methyltransferase from Mycoplasmopsis synoviae (strain 53) (Mycoplasma synoviae).